A 209-amino-acid polypeptide reads, in one-letter code: Small ribosomal subunit protein uS4 (209 aa).

The S4 RNA-binding domain maps to 98 to 158 (SRVDNIVYRL…EKSRSLAAIK (61 aa)).

It belongs to the universal ribosomal protein uS4 family. In terms of assembly, part of the 30S ribosomal subunit. Contacts protein S5. The interaction surface between S4 and S5 is involved in control of translational fidelity.

One of the primary rRNA binding proteins, it binds directly to 16S rRNA where it nucleates assembly of the body of the 30S subunit. In terms of biological role, with S5 and S12 plays an important role in translational accuracy. This is Small ribosomal subunit protein uS4 from Pseudothermotoga lettingae (strain ATCC BAA-301 / DSM 14385 / NBRC 107922 / TMO) (Thermotoga lettingae).